A 33-amino-acid polypeptide reads, in one-letter code: Trypsin inhibitor 1 (33 aa).

3 cysteine pairs are disulfide-bonded: cysteine 1–cysteine 17, cysteine 8–cysteine 21, and cysteine 16–cysteine 32.

As to expression, expressed in leaves and fruit flesh (at protein level).

Its function is as follows. Inhibits trypsin (IC(50)=471 nM). This chain is Trypsin inhibitor 1, found in Beta vulgaris subsp. vulgaris (Beet).